A 286-amino-acid chain; its full sequence is Beta-lactamase Ohio-1 (286 aa).

The first 21 residues, 1–21 (MRYFRLCIISLLATLPLRVHA), serve as a signal peptide directing secretion. The active-site Acyl-ester intermediate is S66. Cysteines 73 and 119 form a disulfide. E164 serves as the catalytic Proton acceptor. 230–232 (KTG) is a substrate binding site.

This sequence belongs to the class-A beta-lactamase family.

The catalysed reaction is a beta-lactam + H2O = a substituted beta-amino acid. In Enterobacter cloacae, this protein is Beta-lactamase Ohio-1.